Consider the following 141-residue polypeptide: Large ribosomal subunit protein uL14 (141 aa).

Belongs to the universal ribosomal protein uL14 family.

This is Large ribosomal subunit protein uL14 (RPL23) from Tetrahymena thermophila (strain SB210).